We begin with the raw amino-acid sequence, 545 residues long: Ribulokinase (545 aa).

The protein belongs to the ribulokinase family.

It carries out the reaction D-ribulose + ATP = D-ribulose 5-phosphate + ADP + H(+). The catalysed reaction is L-ribulose + ATP = L-ribulose 5-phosphate + ADP + H(+). It functions in the pathway carbohydrate degradation; L-arabinose degradation via L-ribulose; D-xylulose 5-phosphate from L-arabinose (bacterial route): step 2/3. This is Ribulokinase from Staphylococcus aureus (strain USA300).